A 446-amino-acid polypeptide reads, in one-letter code: Histidine--tRNA ligase (446 aa).

This sequence belongs to the class-II aminoacyl-tRNA synthetase family. As to quaternary structure, homodimer.

The protein resides in the cytoplasm. It catalyses the reaction tRNA(His) + L-histidine + ATP = L-histidyl-tRNA(His) + AMP + diphosphate + H(+). The polypeptide is Histidine--tRNA ligase (Paraburkholderia xenovorans (strain LB400)).